The following is a 450-amino-acid chain: Chromosomal replication initiator protein DnaA (450 aa).

The segment at 1–84 (MENIHDLWDR…AVKFIIPPNQ (84 aa)) is domain I, interacts with DnaA modulators. Residues 84–111 (QDDEELEFQSSKKKQRKPYEETNDFPQS) form a domain II region. The disordered stretch occupies residues 89–108 (LEFQSSKKKQRKPYEETNDF). The segment at 112–328 (MLNPKYTFDT…GALIRVVAYS (217 aa)) is domain III, AAA+ region. The ATP site is built by Gly-156, Gly-158, Lys-159, and Thr-160. The tract at residues 329-450 (SLINKEITAD…QEIQEKLKQL (122 aa)) is domain IV, binds dsDNA.

Belongs to the DnaA family. As to quaternary structure, oligomerizes as a right-handed, spiral filament on DNA at oriC.

The protein resides in the cytoplasm. In terms of biological role, plays an essential role in the initiation and regulation of chromosomal replication. ATP-DnaA binds to the origin of replication (oriC) to initiate formation of the DNA replication initiation complex once per cell cycle. Binds the DnaA box (a 9 base pair repeat at the origin) and separates the double-stranded (ds)DNA. Forms a right-handed helical filament on oriC DNA; dsDNA binds to the exterior of the filament while single-stranded (ss)DNA is stabiized in the filament's interior. The ATP-DnaA-oriC complex binds and stabilizes one strand of the AT-rich DNA unwinding element (DUE), permitting loading of DNA polymerase. After initiation quickly degrades to an ADP-DnaA complex that is not apt for DNA replication. Binds acidic phospholipids. In Geobacillus kaustophilus (strain HTA426), this protein is Chromosomal replication initiator protein DnaA.